A 492-amino-acid polypeptide reads, in one-letter code: Catalase isozyme 1 (492 aa).

Catalysis depends on residues H65 and N138. A heme-binding site is contributed by Y348.

The protein belongs to the catalase family. In terms of assembly, homotetramer. Heme serves as cofactor. Scutella, milky endosperm of immature kernels, leaves and epicotyls.

It localises to the peroxisome. It catalyses the reaction 2 H2O2 = O2 + 2 H2O. In terms of biological role, occurs in almost all aerobically respiring organisms and serves to protect cells from the toxic effects of hydrogen peroxide. This chain is Catalase isozyme 1 (CAT1), found in Zea mays (Maize).